A 273-amino-acid chain; its full sequence is Ribosomal RNA small subunit methyltransferase A (273 aa).

S-adenosyl-L-methionine is bound by residues asparagine 18, leucine 20, glycine 45, glutamate 66, aspartate 91, and asparagine 113.

The protein belongs to the class I-like SAM-binding methyltransferase superfamily. rRNA adenine N(6)-methyltransferase family. RsmA subfamily.

It localises to the cytoplasm. The catalysed reaction is adenosine(1518)/adenosine(1519) in 16S rRNA + 4 S-adenosyl-L-methionine = N(6)-dimethyladenosine(1518)/N(6)-dimethyladenosine(1519) in 16S rRNA + 4 S-adenosyl-L-homocysteine + 4 H(+). Its function is as follows. Specifically dimethylates two adjacent adenosines (A1518 and A1519) in the loop of a conserved hairpin near the 3'-end of 16S rRNA in the 30S particle. May play a critical role in biogenesis of 30S subunits. This is Ribosomal RNA small subunit methyltransferase A from Klebsiella pneumoniae subsp. pneumoniae (strain ATCC 700721 / MGH 78578).